Here is a 264-residue protein sequence, read N- to C-terminus: Sulfur carrier protein FdhD (264 aa).

C107 acts as the Cysteine persulfide intermediate in catalysis.

The protein belongs to the FdhD family.

It is found in the cytoplasm. Its function is as follows. Required for formate dehydrogenase (FDH) activity. Acts as a sulfur carrier protein that transfers sulfur from IscS to the molybdenum cofactor prior to its insertion into FDH. The sequence is that of Sulfur carrier protein FdhD from Staphylococcus haemolyticus (strain JCSC1435).